Reading from the N-terminus, the 451-residue chain is Chromosomal replication initiator protein DnaA (451 aa).

The interval 1–72 is domain I, interacts with DnaA modulators; the sequence is MQSIEDIWQE…ANILQEITGR (72 aa). A domain II region spans residues 72–108; it reads RLFDVRFIDGEQEENFEYTVIKPNPALDEDGIEIGKH. The tract at residues 109 to 325 is domain III, AAA+ region; that stretch reads MLNPRYVFDT…GALIRVVAYS (217 aa). 4 residues coordinate ATP: glycine 153, glycine 155, lysine 156, and threonine 157. Residues 326-451 form a domain IV, binds dsDNA region; the sequence is SLVNKDITAG…KNLRKAQNMF (126 aa).

Belongs to the DnaA family. In terms of assembly, oligomerizes as a right-handed, spiral filament on DNA at oriC.

It is found in the cytoplasm. Functionally, plays an essential role in the initiation and regulation of chromosomal replication. ATP-DnaA binds to the origin of replication (oriC) to initiate formation of the DNA replication initiation complex once per cell cycle. Binds the DnaA box (a 9 base pair repeat at the origin) and separates the double-stranded (ds)DNA. Forms a right-handed helical filament on oriC DNA; dsDNA binds to the exterior of the filament while single-stranded (ss)DNA is stabiized in the filament's interior. The ATP-DnaA-oriC complex binds and stabilizes one strand of the AT-rich DNA unwinding element (DUE), permitting loading of DNA polymerase. After initiation quickly degrades to an ADP-DnaA complex that is not apt for DNA replication. Binds acidic phospholipids. This Listeria monocytogenes serotype 4b (strain F2365) protein is Chromosomal replication initiator protein DnaA.